The sequence spans 341 residues: Glucokinase (341 aa).

18–23 (GDIGGT) contributes to the ATP binding site.

It belongs to the bacterial glucokinase family.

The protein resides in the cytoplasm. It catalyses the reaction D-glucose + ATP = D-glucose 6-phosphate + ADP + H(+). The polypeptide is Glucokinase (Rhizobium leguminosarum bv. trifolii (strain WSM2304)).